A 106-amino-acid polypeptide reads, in one-letter code: uncharacterized protein (106 aa).

Residues 1–6 (MYQTSP) are Cytoplasmic-facing. Residues 7-27 (LSLFYFQVLVPKFLECFLCFP) traverse the membrane as a helical segment. The Extracellular portion of the chain corresponds to 28–32 (YHKIS). The chain crosses the membrane as a helical span at residues 33-53 (LVALLSFFYCQLQTNMIILLS). The Cytoplasmic segment spans residues 54–73 (QIKRFLYRQIMIALKIKAKK). Residues 74-94 (FWFIFKYFNVSCDARLFNELF) traverse the membrane as a helical segment. The Extracellular portion of the chain corresponds to 95 to 106 (YIFQTYVSVDSK).

The protein resides in the membrane. This is an uncharacterized protein from Saccharomyces cerevisiae (strain ATCC 204508 / S288c) (Baker's yeast).